A 288-amino-acid chain; its full sequence is Bifunctional protein FolD (288 aa).

Residues 166-168 and Ile-232 each bind NADP(+); that span reads GAS.

This sequence belongs to the tetrahydrofolate dehydrogenase/cyclohydrolase family. In terms of assembly, homodimer.

The enzyme catalyses (6R)-5,10-methylene-5,6,7,8-tetrahydrofolate + NADP(+) = (6R)-5,10-methenyltetrahydrofolate + NADPH. The catalysed reaction is (6R)-5,10-methenyltetrahydrofolate + H2O = (6R)-10-formyltetrahydrofolate + H(+). It participates in one-carbon metabolism; tetrahydrofolate interconversion. Its function is as follows. Catalyzes the oxidation of 5,10-methylenetetrahydrofolate to 5,10-methenyltetrahydrofolate and then the hydrolysis of 5,10-methenyltetrahydrofolate to 10-formyltetrahydrofolate. The protein is Bifunctional protein FolD of Escherichia fergusonii (strain ATCC 35469 / DSM 13698 / CCUG 18766 / IAM 14443 / JCM 21226 / LMG 7866 / NBRC 102419 / NCTC 12128 / CDC 0568-73).